The primary structure comprises 179 residues: Large ribosomal subunit protein uL5 (179 aa).

It belongs to the universal ribosomal protein uL5 family. Part of the 50S ribosomal subunit; part of the 5S rRNA/L5/L18/L25 subcomplex. Contacts the 5S rRNA and the P site tRNA. Forms a bridge to the 30S subunit in the 70S ribosome.

Its function is as follows. This is one of the proteins that bind and probably mediate the attachment of the 5S RNA into the large ribosomal subunit, where it forms part of the central protuberance. In the 70S ribosome it contacts protein S13 of the 30S subunit (bridge B1b), connecting the 2 subunits; this bridge is implicated in subunit movement. Contacts the P site tRNA; the 5S rRNA and some of its associated proteins might help stabilize positioning of ribosome-bound tRNAs. This chain is Large ribosomal subunit protein uL5, found in Variovorax paradoxus (strain S110).